The following is a 252-amino-acid chain: 3-dehydroquinate dehydratase (252 aa).

Residues serine 21, 46-48 (EWR), and arginine 82 each bind 3-dehydroquinate. Histidine 143 (proton donor/acceptor) is an active-site residue. Lysine 170 (schiff-base intermediate with substrate) is an active-site residue. 3-dehydroquinate contacts are provided by arginine 213, serine 232, and glutamine 236.

The protein belongs to the type-I 3-dehydroquinase family. In terms of assembly, homodimer.

The catalysed reaction is 3-dehydroquinate = 3-dehydroshikimate + H2O. Its pathway is metabolic intermediate biosynthesis; chorismate biosynthesis; chorismate from D-erythrose 4-phosphate and phosphoenolpyruvate: step 3/7. Functionally, involved in the third step of the chorismate pathway, which leads to the biosynthesis of aromatic amino acids. Catalyzes the cis-dehydration of 3-dehydroquinate (DHQ) and introduces the first double bond of the aromatic ring to yield 3-dehydroshikimate. The sequence is that of 3-dehydroquinate dehydratase from Shigella sonnei (strain Ss046).